We begin with the raw amino-acid sequence, 513 residues long: Histidine ammonia-lyase (513 aa).

Positions 144–146 (ASG) form a cross-link, 5-imidazolinone (Ala-Gly). Residue serine 145 is modified to 2,3-didehydroalanine (Ser).

It belongs to the PAL/histidase family. Contains an active site 4-methylidene-imidazol-5-one (MIO), which is formed autocatalytically by cyclization and dehydration of residues Ala-Ser-Gly.

The protein localises to the cytoplasm. The enzyme catalyses L-histidine = trans-urocanate + NH4(+). It participates in amino-acid degradation; L-histidine degradation into L-glutamate; N-formimidoyl-L-glutamate from L-histidine: step 1/3. This chain is Histidine ammonia-lyase, found in Streptococcus pyogenes serotype M3 (strain ATCC BAA-595 / MGAS315).